Here is a 355-residue protein sequence, read N- to C-terminus: UDP-N-acetylglucosamine--N-acetylmuramyl-(pentapeptide) pyrophosphoryl-undecaprenol N-acetylglucosamine transferase (355 aa).

Residues 13–15 (TGG), N125, R162, S190, I244, and Q289 contribute to the UDP-N-acetyl-alpha-D-glucosamine site.

It belongs to the glycosyltransferase 28 family. MurG subfamily.

It localises to the cell inner membrane. The enzyme catalyses di-trans,octa-cis-undecaprenyl diphospho-N-acetyl-alpha-D-muramoyl-L-alanyl-D-glutamyl-meso-2,6-diaminopimeloyl-D-alanyl-D-alanine + UDP-N-acetyl-alpha-D-glucosamine = di-trans,octa-cis-undecaprenyl diphospho-[N-acetyl-alpha-D-glucosaminyl-(1-&gt;4)]-N-acetyl-alpha-D-muramoyl-L-alanyl-D-glutamyl-meso-2,6-diaminopimeloyl-D-alanyl-D-alanine + UDP + H(+). It participates in cell wall biogenesis; peptidoglycan biosynthesis. In terms of biological role, cell wall formation. Catalyzes the transfer of a GlcNAc subunit on undecaprenyl-pyrophosphoryl-MurNAc-pentapeptide (lipid intermediate I) to form undecaprenyl-pyrophosphoryl-MurNAc-(pentapeptide)GlcNAc (lipid intermediate II). The sequence is that of UDP-N-acetylglucosamine--N-acetylmuramyl-(pentapeptide) pyrophosphoryl-undecaprenol N-acetylglucosamine transferase from Neisseria meningitidis serogroup C / serotype 2a (strain ATCC 700532 / DSM 15464 / FAM18).